The chain runs to 466 residues: GTPase Der (466 aa).

EngA-type G domains are found at residues 30 to 193 (PVVA…PEVS) and 203 to 376 (RRVA…ASWD). GTP-binding positions include 36 to 43 (GRPNVGKS), 83 to 87 (DTGGW), 145 to 148 (NKVD), 209 to 216 (GKPNVGKS), 256 to 260 (DTAGL), and 321 to 324 (NKWD). The 83-residue stretch at 377–459 (TRIATGPLNS…PIRINVRVRE (83 aa)) folds into the KH-like domain.

It belongs to the TRAFAC class TrmE-Era-EngA-EngB-Septin-like GTPase superfamily. EngA (Der) GTPase family. In terms of assembly, associates with the 50S ribosomal subunit.

Functionally, GTPase that plays an essential role in the late steps of ribosome biogenesis. This chain is GTPase Der, found in Mycolicibacterium paratuberculosis (strain ATCC BAA-968 / K-10) (Mycobacterium paratuberculosis).